A 231-amino-acid polypeptide reads, in one-letter code: 2-phospho-L-lactate guanylyltransferase (231 aa).

The protein belongs to the CofC family. In terms of assembly, homodimer.

The catalysed reaction is (2S)-2-phospholactate + GTP + H(+) = (2S)-lactyl-2-diphospho-5'-guanosine + diphosphate. It functions in the pathway cofactor biosynthesis; coenzyme F420 biosynthesis. Its function is as follows. Guanylyltransferase that catalyzes the activation of (2S)-2-phospholactate (2-PL) as (2S)-lactyl-2-diphospho-5'-guanosine, via the condensation of 2-PL with GTP. It is involved in the biosynthesis of coenzyme F420, a hydride carrier cofactor. This is 2-phospho-L-lactate guanylyltransferase from Haloterrigena turkmenica (strain ATCC 51198 / DSM 5511 / JCM 9101 / NCIMB 13204 / VKM B-1734 / 4k) (Halococcus turkmenicus).